A 332-amino-acid chain; its full sequence is NADH-quinone oxidoreductase subunit H (332 aa).

Helical transmembrane passes span 4–24 (FAFF…IFAS), 44–64 (IGPD…MIKL), 78–98 (FIFA…LAAI), 120–140 (VALL…FLGG), 165–185 (VGAL…LVDI), 194–214 (FSWL…ALFI), 255–275 (IAGA…FWII), 279–299 (IMMI…RAAF), and 312–332 (YLIL…AVLL).

Belongs to the complex I subunit 1 family. NDH-1 is composed of 14 different subunits. Subunits NuoA, H, J, K, L, M, N constitute the membrane sector of the complex.

The protein resides in the cell inner membrane. The enzyme catalyses a quinone + NADH + 5 H(+)(in) = a quinol + NAD(+) + 4 H(+)(out). Its function is as follows. NDH-1 shuttles electrons from NADH, via FMN and iron-sulfur (Fe-S) centers, to quinones in the respiratory chain. The immediate electron acceptor for the enzyme in this species is believed to be ubiquinone. Couples the redox reaction to proton translocation (for every two electrons transferred, four hydrogen ions are translocated across the cytoplasmic membrane), and thus conserves the redox energy in a proton gradient. This subunit may bind ubiquinone. The sequence is that of NADH-quinone oxidoreductase subunit H from Campylobacter jejuni subsp. jejuni serotype O:6 (strain 81116 / NCTC 11828).